A 1814-amino-acid chain; its full sequence is U3 small nucleolar RNA-associated protein 10 (1814 aa).

The HEAT 1 repeat unit spans residues 583–620 (LDFQALLPFLLVALTDASERVRREAAAALAAVGSLYKK). The next 2 helical transmembrane spans lie at 942–962 (IQSGMSYLLSLTLGSLLAIVN) and 998–1018 (ALLLVAGLSVIAPELVLHSVM). 4 HEAT repeats span residues 1042–1079 (QTIDQVVPALIQSLRDQKRDVVSGTSELLLSFTAAFEH), 1249–1286 (LTLVDFLDTIEVLLERPNDELRRKVLRLLEGRLRQNPE), 1293–1331 (IRVLDFLPTLVDIIRNSADILLKHAAVACIDRIAEKYGK), and 1770–1807 (ALLPEMLPYISELMEDEDENVEREVRKWVKQIENVLGE).

The protein belongs to the HEATR1/UTP10 family. In terms of assembly, component of the ribosomal small subunit (SSU) processome.

It localises to the nucleus. The protein resides in the nucleolus. Its subcellular location is the membrane. In terms of biological role, involved in nucleolar processing of pre-18S ribosomal RNA. Involved in ribosome biosynthesis. The protein is U3 small nucleolar RNA-associated protein 10 of Neosartorya fischeri (strain ATCC 1020 / DSM 3700 / CBS 544.65 / FGSC A1164 / JCM 1740 / NRRL 181 / WB 181) (Aspergillus fischerianus).